The chain runs to 520 residues: tRNA-2-methylthio-N(6)-dimethylallyladenosine synthase (520 aa).

Positions 77–195 (KKFLIRTYGC…LPHLLRDAIF (119 aa)) constitute an MTTase N-terminal domain. [4Fe-4S] cluster contacts are provided by Cys86, Cys122, Cys156, Cys232, Cys236, and Cys239. Residues 218–448 (RKNKTQAWVN…ALVNDISNKR (231 aa)) form the Radical SAM core domain. In terms of domain architecture, TRAM spans 450-513 (LDYQDKIVEV…TWSLDGEIVS (64 aa)).

It belongs to the methylthiotransferase family. MiaB subfamily. As to quaternary structure, monomer. The cofactor is [4Fe-4S] cluster.

The protein localises to the cytoplasm. It catalyses the reaction N(6)-dimethylallyladenosine(37) in tRNA + (sulfur carrier)-SH + AH2 + 2 S-adenosyl-L-methionine = 2-methylsulfanyl-N(6)-dimethylallyladenosine(37) in tRNA + (sulfur carrier)-H + 5'-deoxyadenosine + L-methionine + A + S-adenosyl-L-homocysteine + 2 H(+). Functionally, catalyzes the methylthiolation of N6-(dimethylallyl)adenosine (i(6)A), leading to the formation of 2-methylthio-N6-(dimethylallyl)adenosine (ms(2)i(6)A) at position 37 in tRNAs that read codons beginning with uridine. This chain is tRNA-2-methylthio-N(6)-dimethylallyladenosine synthase, found in Shouchella clausii (strain KSM-K16) (Alkalihalobacillus clausii).